Here is a 498-residue protein sequence, read N- to C-terminus: NADPH:adrenodoxin oxidoreductase, mitochondrial (498 aa).

A mitochondrion-targeting transit peptide spans 1-37 (MSTHKAALCKVQILKLFLISARCVRITRFYGVCGLST). Positions 54, 75, 83, and 119 each coordinate FAD. Residues 190–193 (QGNV), 234–235 (RR), and glutamate 246 contribute to the NADP(+) site. FAD is bound by residues tryptophan 404 and 411–413 (GVI). Glycine 411 is a binding site for NADP(+). Positions 469–488 (DSEETRRGETRGKPREKMLD) are enriched in basic and acidic residues. Residues 469–489 (DSEETRRGETRGKPREKMLDV) are disordered.

This sequence belongs to the ferredoxin--NADP reductase type 1 family. FAD serves as cofactor.

It localises to the mitochondrion inner membrane. It catalyses the reaction 2 reduced [adrenodoxin] + NADP(+) + H(+) = 2 oxidized [adrenodoxin] + NADPH. Its pathway is steroid metabolism; cholesterol metabolism. Its function is as follows. Serves as the first electron transfer protein in all the mitochondrial P450 systems including cholesterol side chain cleavage in all steroidogenic tissues, steroid 11-beta hydroxylation in the adrenal cortex, 25-OH-vitamin D3-24 hydroxylation in the kidney, and sterol C-27 hydroxylation in the liver. The protein is NADPH:adrenodoxin oxidoreductase, mitochondrial (fdxr) of Salvelinus fontinalis (Brook trout).